The primary structure comprises 99 residues: Essential MCU regulator, mitochondrial (99 aa).

Residues 1–39 (MAARVGVLSVAGFRAAARAGGLLRASKQSSAVSHVPCRT) constitute a mitochondrion transit peptide. Over 40-57 (AIATSAGTVLPKPEKVSF) the chain is Mitochondrial matrix. Residues 58–77 (GLLRVFTVVIPFLYIGTLIS) form a helical membrane-spanning segment. Residues 78–99 (KNFAALLEEHDIFVPEDDDDDD) are Mitochondrial intermembrane-facing.

The protein belongs to the SMDT1/EMRE family. In terms of assembly, component of the uniplex complex.

It is found in the mitochondrion inner membrane. Its function is as follows. Essential regulatory subunit of the mitochondrial calcium uniporter complex (uniplex), a complex that mediates calcium uptake into mitochondria. Required to bridge the calcium-sensing proteins micu1 with the calcium-conducting subunit mcu. Acts by mediating activation of mcu and retention of micu1 to the mcu pore, in order to ensure tight regulation of the uniplex complex and appropriate responses to intracellular calcium signaling. This is Essential MCU regulator, mitochondrial from Xenopus tropicalis (Western clawed frog).